A 174-amino-acid polypeptide reads, in one-letter code: Membrane protein NfeD2 (174 aa).

Transmembrane regions (helical) follow at residues 16-36, 47-67, and 72-92; these read LIIAGSLTLLFLFFGDVFSGL, LVLSFFTCFSAGGYIGELVLP, and LIALLSCILSIMLVVLLHIFV.

Belongs to the NfeD family.

It localises to the cell membrane. The protein localises to the membrane raft. Functionally, plays a role in assembly of FloT membrane rafts, probably recruited to rafts by FloT. The chain is Membrane protein NfeD2 from Bacillus subtilis (strain 168).